Here is a 554-residue protein sequence, read N- to C-terminus: Endochitinase (554 aa).

An N-terminal signal peptide occupies residues 1–19 (MRATLATLAVLALATAVQS). The region spanning 23-398 (ARIVCYFSNW…KILHKHMSSY (376 aa)) is the GH18 domain. The cysteines at positions 27 and 52 are disulfide-linked. 76-77 (LD) contributes to the chitin binding site. A glycan (N-linked (GlcNAc...) asparagine) is linked at Asn85. 103 to 106 (GGWA) serves as a coordination point for chitin. Residue Glu146 is the Proton donor of the active site. Chitin contacts are provided by residues Tyr147 and 213 to 216 (MSYD). Asn303 carries N-linked (GlcNAc...) asparagine glycosylation. Trp370 provides a ligand contact to chitin. The tract at residues 398 to 494 (YTVPPPHTEN…VPPTENEVDG (97 aa)) is disordered. Positions 431 to 457 (PTTTTAKPASTTKTTVKTTTTTTAKPP) are enriched in low complexity. Positions 467–477 (INVRPEPKPEP) are enriched in basic and acidic residues. The Chitin-binding type-2 domain occupies 495 to 553 (SEICNSDQDYIPDKKHCDKYWRCVNGEAMQFSCQHGTVFNVELNVCDWPSNATRRECQQ). Cysteines 527 and 540 form a disulfide. The N-linked (GlcNAc...) asparagine glycan is linked to Asn545.

Belongs to the glycosyl hydrolase 18 family. Chitinase class II subfamily. Epidermis and gut.

The protein resides in the secreted. It catalyses the reaction Random endo-hydrolysis of N-acetyl-beta-D-glucosaminide (1-&gt;4)-beta-linkages in chitin and chitodextrins.. Its function is as follows. Digests chitin in the exoskeleton during the molting process. This is Endochitinase from Manduca sexta (Tobacco hawkmoth).